The following is a 500-amino-acid chain: Palmitoleoyl-protein carboxylesterase notum1a (500 aa).

Residues 1–26 (MKRSLWVMQVLHWAVMLALVQCGALG) form the signal peptide. Asn-101 is a glycosylation site (N-linked (GlcNAc...) asparagine). Active-site charge relay system residues include Ser-237, Asp-344, and His-393.

The protein belongs to the pectinacetylesterase family. Notum subfamily.

It is found in the secreted. The catalysed reaction is [Wnt protein]-O-(9Z)-hexadecenoyl-L-serine + H2O = [Wnt protein]-L-serine + (9Z)-hexadecenoate + H(+). Functionally, carboxylesterase that acts as a key negative regulator of the Wnt signaling pathway. Acts by specifically mediating depalmitoleoylation of WNT proteins. Serine palmitoleoylation of WNT proteins is required for efficient binding to frizzled receptors. This is Palmitoleoyl-protein carboxylesterase notum1a from Danio rerio (Zebrafish).